Reading from the N-terminus, the 418-residue chain is Serine hydroxymethyltransferase (418 aa).

Residues Leu-121 and 125–127 each bind (6S)-5,6,7,8-tetrahydrofolate; that span reads GHL. An N6-(pyridoxal phosphate)lysine modification is found at Lys-230. 355–357 lines the (6S)-5,6,7,8-tetrahydrofolate pocket; the sequence is SPF.

It belongs to the SHMT family. Homodimer. Pyridoxal 5'-phosphate is required as a cofactor.

Its subcellular location is the cytoplasm. The enzyme catalyses (6R)-5,10-methylene-5,6,7,8-tetrahydrofolate + glycine + H2O = (6S)-5,6,7,8-tetrahydrofolate + L-serine. The protein operates within one-carbon metabolism; tetrahydrofolate interconversion. Its pathway is amino-acid biosynthesis; glycine biosynthesis; glycine from L-serine: step 1/1. In terms of biological role, catalyzes the reversible interconversion of serine and glycine with tetrahydrofolate (THF) serving as the one-carbon carrier. This reaction serves as the major source of one-carbon groups required for the biosynthesis of purines, thymidylate, methionine, and other important biomolecules. Also exhibits THF-independent aldolase activity toward beta-hydroxyamino acids, producing glycine and aldehydes, via a retro-aldol mechanism. The chain is Serine hydroxymethyltransferase from Methylococcus capsulatus (strain ATCC 33009 / NCIMB 11132 / Bath).